The following is a 2963-amino-acid chain: tRNA nuclease CdiA (2963 aa).

The first 29 residues, 1–29 (MIPIYLRQKLISYALIYLVAIQPIMPVMA), serve as a signal peptide directing secretion. Residues 35–320 (AQGSTALDKA…AQGNITLNSH (286 aa)) form a two-partner system transport domain (TPS) region. The interval 573–1074 (GNVVAQEHAQ…MVLNTASLLN (502 aa)) is FHA-1. Residues 1075 to 1342 (RRDGFSVTEK…KPLTRAQLSD (268 aa)) form a receptor binding domain (RBD) region. Residues 1343–1528 (YPLPDSNNGL…LAKAEQAHLQ (186 aa)) form a YP domain region. The periplasmic FHA-1 repeat (pFR) stretch occupies residues 1529-1751 (GSVISGNKVE…ATLQAERDVN (223 aa)). Over residues 1759 to 1770 (TRNQHIDSEDKT) the composition is skewed to basic and acidic residues. Disordered regions lie at residues 1759–1787 (TRNQ…LTAS) and 1992–2012 (SKSS…SASA). An FHA-2 region spans residues 1762–2314 (QHIDSEDKTT…DSDNYNSIQK (553 aa)). Over residues 1771–1782 (TGYTRSTLSSGG) the composition is skewed to polar residues. The VEDN CT cleavage motif signature appears at 2694 to 2697 (VEDN). The segment at 2694-2963 (VEDNNLSFGK…TGRVRNFHPN (270 aa)) is C-terminal effector domain (CT).

It in the N-terminal section; belongs to the CdiA toxin family. In the C-terminal section; belongs to the bacterial EndoU family. In terms of assembly, forms a 1:1 complex with cognate immunity protein CdiI.

It localises to the secreted. The protein localises to the target cell. It is found in the target cell cytoplasm. Its function is as follows. Toxic component of a toxin-immunity protein module, which functions as a cellular contact-dependent growth inhibition (CDI) system. CDI modules allow bacteria to communicate with and inhibit the growth of closely related neighboring bacteria in a contact-dependent fashion. Targeting of the CT domain (residues 2824-2963) in the absence of immunity protein inhibits cell growth and causes tRNA(UUC-Glu) cleavage in the anticodon loop; expression of cognate immunity protein CdiI-43969 neutralizes growth inhibition and tRNA(UUC-Glu) remains intact, whereas non-cognate immunity proteins do not confer protection from the toxic effects. Functionally, the CdiA protein is thought to be exported from the cell through the central lumen of CdiB, the other half of its two-partner system (TPS). The TPS domain probably remains associated with CdiB while the FHA-1 domain forms an extended filament with the receptor-binding domain (RBD) at its extremity; in the secretion arrested state the C-terminus of the RBD and YP domains form a hairpin-like structure as the FHA-2, PT and CT domains are periplasmic. The YP domain is probably responsible for this arrest at the point where it re-enters the host cell periplasm. Upon binding to a target cell outer membrane receptor a signal is transmitted to activate secretion. The filament elongates slightly, the rest of CdiA is secreted and the FHA-2 domain becomes stably associated with the target cell's outer membrane where it facilitates entry of the toxic CT domain into the target cell periplasm. From there the toxic CT domain is cleaved and gains access to the target cell cytoplasm via an inner membrane protein. The sequence is that of tRNA nuclease CdiA from Yersinia mollaretii (strain ATCC 43969 / DSM 18520 / CIP 103324 / CNY 7263 / WAIP 204).